Reading from the N-terminus, the 371-residue chain is Ribosomal RNA small subunit methyltransferase H (371 aa).

S-adenosyl-L-methionine contacts are provided by residues glycine 92–histidine 94, aspartate 111, tyrosine 138, aspartate 159, and glutamine 166.

The protein belongs to the methyltransferase superfamily. RsmH family.

It localises to the cytoplasm. It carries out the reaction cytidine(1402) in 16S rRNA + S-adenosyl-L-methionine = N(4)-methylcytidine(1402) in 16S rRNA + S-adenosyl-L-homocysteine + H(+). Its function is as follows. Specifically methylates the N4 position of cytidine in position 1402 (C1402) of 16S rRNA. The sequence is that of Ribosomal RNA small subunit methyltransferase H from Mycolicibacterium gilvum (strain PYR-GCK) (Mycobacterium gilvum (strain PYR-GCK)).